A 1252-amino-acid chain; its full sequence is DNA-directed RNA polymerase subunit beta (1252 aa).

It belongs to the RNA polymerase beta chain family. As to quaternary structure, the RNAP catalytic core consists of 2 alpha, 1 beta, 1 beta' and 1 omega subunit. When a sigma factor is associated with the core the holoenzyme is formed, which can initiate transcription.

The catalysed reaction is RNA(n) + a ribonucleoside 5'-triphosphate = RNA(n+1) + diphosphate. DNA-dependent RNA polymerase catalyzes the transcription of DNA into RNA using the four ribonucleoside triphosphates as substrates. The protein is DNA-directed RNA polymerase subunit beta of Chlamydia caviae (strain ATCC VR-813 / DSM 19441 / 03DC25 / GPIC) (Chlamydophila caviae).